Here is an 85-residue protein sequence, read N- to C-terminus: RNA-binding protein KhpA (85 aa).

Positions 32–85 (YLEYNLTVNPEDIGRVIGRQGRVASAIRTIVYSVRVSGPKRVRLTIEDGQQKNS) constitute a KH domain.

The protein belongs to the KhpA RNA-binding protein family. In terms of assembly, forms a complex with KhpB.

It localises to the cytoplasm. A probable RNA chaperone. Forms a complex with KhpB which binds to cellular RNA and controls its expression. Plays a role in peptidoglycan (PG) homeostasis and cell length regulation. Its function is as follows. Necessary for correct cell elongation. This chain is RNA-binding protein KhpA, found in Lactiplantibacillus plantarum (strain ATCC BAA-793 / NCIMB 8826 / WCFS1) (Lactobacillus plantarum).